The sequence spans 360 residues: Tryptophan--tRNA ligase, mitochondrial (360 aa).

Residues 1 to 18 (MALFSVRKARECWRFIRA) constitute a mitochondrion transit peptide. ATP-binding positions include Gln-42 and 48-51 (HLGN). Residue Asp-167 coordinates L-tryptophan. ATP contacts are provided by residues 179 to 181 (GED), Val-217, and 226 to 230 (KMSKS).

This sequence belongs to the class-I aminoacyl-tRNA synthetase family.

It localises to the mitochondrion matrix. It is found in the mitochondrion. The catalysed reaction is tRNA(Trp) + L-tryptophan + ATP = L-tryptophyl-tRNA(Trp) + AMP + diphosphate + H(+). Catalyzes the attachment of tryptophan to tRNA(Trp) in a two-step reaction: tryptophan is first activated by ATP to form Trp-AMP and then transferred to the acceptor end of tRNA(Trp). This chain is Tryptophan--tRNA ligase, mitochondrial (Wars2), found in Mus musculus (Mouse).